The following is a 156-amino-acid chain: Small ribosomal subunit protein uS7 (156 aa).

It belongs to the universal ribosomal protein uS7 family. Part of the 30S ribosomal subunit. Contacts proteins S9 and S11.

Functionally, one of the primary rRNA binding proteins, it binds directly to 16S rRNA where it nucleates assembly of the head domain of the 30S subunit. Is located at the subunit interface close to the decoding center, probably blocks exit of the E-site tRNA. This chain is Small ribosomal subunit protein uS7, found in Solidesulfovibrio magneticus (strain ATCC 700980 / DSM 13731 / RS-1) (Desulfovibrio magneticus).